We begin with the raw amino-acid sequence, 312 residues long: Aspartoacylase (312 aa).

Residues His-20 and Glu-23 each coordinate Zn(2+). N-acetyl-L-aspartate contacts are provided by Arg-62, Asn-69, and Arg-70. His-115 lines the Zn(2+) pocket. The N-acetyl-L-aspartate site is built by Tyr-163 and Arg-167. Glu-177 (proton donor/acceptor) is an active-site residue. Tyr-287 contacts N-acetyl-L-aspartate.

Belongs to the AspA/AstE family. Aspartoacylase subfamily. As to quaternary structure, homodimer. Zn(2+) is required as a cofactor.

It localises to the cytoplasm. The protein localises to the nucleus. It catalyses the reaction an N-acyl-L-aspartate + H2O = a carboxylate + L-aspartate. The enzyme catalyses N-acetyl-L-aspartate + H2O = L-aspartate + acetate. Functionally, catalyzes the deacetylation of N-acetylaspartic acid (NAA) to produce acetate and L-aspartate. NAA occurs in high concentration in brain and its hydrolysis NAA plays a significant part in the maintenance of intact white matter. In other tissues it acts as a scavenger of NAA from body fluids. The polypeptide is Aspartoacylase (Mus musculus (Mouse)).